We begin with the raw amino-acid sequence, 146 residues long: 3-hydroxyacyl-[acyl-carrier-protein] dehydratase FabZ (146 aa).

Residue His49 is part of the active site.

The protein belongs to the thioester dehydratase family. FabZ subfamily.

It is found in the cytoplasm. It catalyses the reaction a (3R)-hydroxyacyl-[ACP] = a (2E)-enoyl-[ACP] + H2O. Involved in unsaturated fatty acids biosynthesis. Catalyzes the dehydration of short chain beta-hydroxyacyl-ACPs and long chain saturated and unsaturated beta-hydroxyacyl-ACPs. The chain is 3-hydroxyacyl-[acyl-carrier-protein] dehydratase FabZ from Ectopseudomonas mendocina (strain ymp) (Pseudomonas mendocina).